A 228-amino-acid polypeptide reads, in one-letter code: L-ribulose-5-phosphate 4-epimerase UlaF (228 aa).

Substrate contacts are provided by residues 26–27, 43–44, and 72–73; these read GN, SG, and SS. The Zn(2+) site is built by aspartate 74, histidine 93, and histidine 95. Aspartate 118 acts as the Proton donor/acceptor in catalysis. Position 167 (histidine 167) interacts with Zn(2+). Tyrosine 225 acts as the Proton donor/acceptor in catalysis.

Belongs to the aldolase class II family. AraD/FucA subfamily. The cofactor is Zn(2+).

The enzyme catalyses L-ribulose 5-phosphate = D-xylulose 5-phosphate. It functions in the pathway cofactor degradation; L-ascorbate degradation; D-xylulose 5-phosphate from L-ascorbate: step 4/4. Its function is as follows. Catalyzes the isomerization of L-ribulose 5-phosphate to D-xylulose 5-phosphate. Is involved in the anaerobic L-ascorbate utilization. The polypeptide is L-ribulose-5-phosphate 4-epimerase UlaF (Escherichia coli O7:K1 (strain IAI39 / ExPEC)).